Here is a 260-residue protein sequence, read N- to C-terminus: Hydroxyethylthiazole kinase (260 aa).

Methionine 38 is a substrate binding site. 2 residues coordinate ATP: lysine 114 and serine 161. Residue glycine 188 coordinates substrate.

This sequence belongs to the Thz kinase family. Mg(2+) serves as cofactor.

The enzyme catalyses 5-(2-hydroxyethyl)-4-methylthiazole + ATP = 4-methyl-5-(2-phosphooxyethyl)-thiazole + ADP + H(+). Its pathway is cofactor biosynthesis; thiamine diphosphate biosynthesis; 4-methyl-5-(2-phosphoethyl)-thiazole from 5-(2-hydroxyethyl)-4-methylthiazole: step 1/1. Functionally, catalyzes the phosphorylation of the hydroxyl group of 4-methyl-5-beta-hydroxyethylthiazole (THZ). The protein is Hydroxyethylthiazole kinase of Campylobacter lari (strain RM2100 / D67 / ATCC BAA-1060).